Here is a 181-residue protein sequence, read N- to C-terminus: Dual-action ribosomal maturation protein DarP (181 aa).

The tract at residues 1–24 (MTGIKRPMSQYQDDNEWEDWGPSK) is disordered.

The protein belongs to the DarP family.

Its subcellular location is the cytoplasm. Member of a network of 50S ribosomal subunit biogenesis factors which assembles along the 30S-50S interface, preventing incorrect 23S rRNA structures from forming. Promotes peptidyl transferase center (PTC) maturation. The sequence is that of Dual-action ribosomal maturation protein DarP from Aeromonas hydrophila subsp. hydrophila (strain ATCC 7966 / DSM 30187 / BCRC 13018 / CCUG 14551 / JCM 1027 / KCTC 2358 / NCIMB 9240 / NCTC 8049).